The sequence spans 142 residues: Hemoglobin subunit alpha-1 (142 aa).

Positions Val2–Arg142 constitute a Globin domain. An O2-binding site is contributed by His59. His88 contributes to the heme b binding site.

This sequence belongs to the globin family. In terms of assembly, heterotetramer of two alpha chains and two beta chains.

Functionally, involved in oxygen transport from the lung to the various peripheral tissues. Its function is as follows. Hemopressin acts as an antagonist peptide of the cannabinoid receptor CNR1. Hemopressin-binding efficiently blocks cannabinoid receptor CNR1 and subsequent signaling. In Capra hircus (Goat), this protein is Hemoglobin subunit alpha-1 (HBA1).